The sequence spans 831 residues: uncharacterized protein (831 aa).

Catalysis depends on histidine 787, which acts as the Tele-phosphohistidine intermediate.

It belongs to the PEP-utilizing enzyme family.

This is an uncharacterized protein from Bacillus subtilis (strain 168).